A 276-amino-acid polypeptide reads, in one-letter code: Large ribosomal subunit protein uL2 (276 aa).

The tract at residues 221–276 (RGSAMNPNDHPHGGGEGRAPIGRKSPMTPWGKKARGVKTRDRKKASNALIIRRRTK) is disordered. The span at 252–276 (KKARGVKTRDRKKASNALIIRRRTK) shows a compositional bias: basic residues.

It belongs to the universal ribosomal protein uL2 family. In terms of assembly, part of the 50S ribosomal subunit. Forms a bridge to the 30S subunit in the 70S ribosome.

One of the primary rRNA binding proteins. Required for association of the 30S and 50S subunits to form the 70S ribosome, for tRNA binding and peptide bond formation. It has been suggested to have peptidyltransferase activity; this is somewhat controversial. Makes several contacts with the 16S rRNA in the 70S ribosome. This Aster yellows phytoplasma protein is Large ribosomal subunit protein uL2.